Consider the following 227-residue polypeptide: 7-cyano-7-deazaguanine synthase (227 aa).

9-19 (LSGGLDSATVL) contributes to the ATP binding site. Zn(2+) contacts are provided by Cys189, Cys199, Cys202, and Cys205.

Belongs to the QueC family. Zn(2+) is required as a cofactor.

It carries out the reaction 7-carboxy-7-deazaguanine + NH4(+) + ATP = 7-cyano-7-deazaguanine + ADP + phosphate + H2O + H(+). It participates in purine metabolism; 7-cyano-7-deazaguanine biosynthesis. Its function is as follows. Catalyzes the ATP-dependent conversion of 7-carboxy-7-deazaguanine (CDG) to 7-cyano-7-deazaguanine (preQ(0)). This is 7-cyano-7-deazaguanine synthase from Cupriavidus necator (strain ATCC 17699 / DSM 428 / KCTC 22496 / NCIMB 10442 / H16 / Stanier 337) (Ralstonia eutropha).